A 157-amino-acid polypeptide reads, in one-letter code: Cyclic pyranopterin monophosphate synthase (157 aa).

Substrate-binding positions include 73–75 (LCH) and 110–111 (ME). Residue aspartate 125 is part of the active site.

It belongs to the MoaC family. In terms of assembly, homohexamer; trimer of dimers.

The enzyme catalyses (8S)-3',8-cyclo-7,8-dihydroguanosine 5'-triphosphate = cyclic pyranopterin phosphate + diphosphate. It participates in cofactor biosynthesis; molybdopterin biosynthesis. Catalyzes the conversion of (8S)-3',8-cyclo-7,8-dihydroguanosine 5'-triphosphate to cyclic pyranopterin monophosphate (cPMP). The protein is Cyclic pyranopterin monophosphate synthase of Pseudomonas fluorescens (strain SBW25).